We begin with the raw amino-acid sequence, 288 residues long: Bifunctional protein FolD (288 aa).

NADP(+) is bound by residues 166-168 (GRS), serine 191, and isoleucine 232.

This sequence belongs to the tetrahydrofolate dehydrogenase/cyclohydrolase family. Homodimer.

It catalyses the reaction (6R)-5,10-methylene-5,6,7,8-tetrahydrofolate + NADP(+) = (6R)-5,10-methenyltetrahydrofolate + NADPH. It carries out the reaction (6R)-5,10-methenyltetrahydrofolate + H2O = (6R)-10-formyltetrahydrofolate + H(+). Its pathway is one-carbon metabolism; tetrahydrofolate interconversion. In terms of biological role, catalyzes the oxidation of 5,10-methylenetetrahydrofolate to 5,10-methenyltetrahydrofolate and then the hydrolysis of 5,10-methenyltetrahydrofolate to 10-formyltetrahydrofolate. The chain is Bifunctional protein FolD from Rickettsia africae (strain ESF-5).